The following is a 347-amino-acid chain: Ferrochelatase (347 aa).

Cysteine 158 contributes to the [2Fe-2S] cluster binding site. Histidine 193 and glutamate 272 together coordinate Fe cation. Residues cysteine 332, cysteine 339, and cysteine 341 each coordinate [2Fe-2S] cluster.

The protein belongs to the ferrochelatase family. As to quaternary structure, homodimer. The cofactor is [2Fe-2S] cluster.

It localises to the cytoplasm. The catalysed reaction is heme b + 2 H(+) = protoporphyrin IX + Fe(2+). It participates in porphyrin-containing compound metabolism; protoheme biosynthesis; protoheme from protoporphyrin-IX: step 1/1. Functionally, catalyzes the ferrous insertion into protoporphyrin IX. The sequence is that of Ferrochelatase from Caulobacter vibrioides (strain ATCC 19089 / CIP 103742 / CB 15) (Caulobacter crescentus).